The following is a 312-amino-acid chain: DNA primase small subunit PriS (312 aa).

Residues D88, D90, and D215 contribute to the active site.

Belongs to the eukaryotic-type primase small subunit family. As to quaternary structure, heterodimer of a small subunit (PriS) and a large subunit (PriL). It depends on Mg(2+) as a cofactor. Requires Mn(2+) as cofactor.

In terms of biological role, catalytic subunit of DNA primase, an RNA polymerase that catalyzes the synthesis of short RNA molecules used as primers for DNA polymerase during DNA replication. The small subunit contains the primase catalytic core and has DNA synthesis activity on its own. Binding to the large subunit stabilizes and modulates the activity, increasing the rate of DNA synthesis while decreasing the length of the DNA fragments, and conferring RNA synthesis capability. The DNA polymerase activity may enable DNA primase to also catalyze primer extension after primer synthesis. May also play a role in DNA repair. The sequence is that of DNA primase small subunit PriS from Pyrobaculum calidifontis (strain DSM 21063 / JCM 11548 / VA1).